The chain runs to 396 residues: Putative protein IntB (396 aa).

The Core-binding (CB) domain maps to 71-151 (RTFKEVAIEW…RTTAIMRYAV (81 aa)). The Tyr recombinase domain occupies 174–367 (QHRPALELKR…EHLEERRLML (194 aa)). Catalysis depends on residues arginine 213, lysine 252, histidine 316, arginine 319, and histidine 343. Tyrosine 353 functions as the O-(3'-phospho-DNA)-tyrosine intermediate in the catalytic mechanism.

The protein belongs to the 'phage' integrase family.

In Escherichia coli (strain K12), this protein is Putative protein IntB (intB).